The primary structure comprises 304 residues: Serine protease 30 (304 aa).

The N-terminal stretch at 1-21 (MESWARCIFLLLLQILTGGRG) is a signal peptide. Positions 22–30 (DILHSGAGK) are cleaved as a propeptide — activation peptide. Positions 31-271 (IVGGQDAPEG…YVDWIQRTLA (241 aa)) constitute a Peptidase S1 domain. Cysteine 57 and cysteine 73 are disulfide-bonded. The Charge relay system role is filled by histidine 72. Asparagine 79 carries an N-linked (GlcNAc...) asparagine glycan. Catalysis depends on aspartate 122, which acts as the Charge relay system. 3 disulfide bridges follow: cysteine 155-cysteine 229, cysteine 185-cysteine 208, and cysteine 219-cysteine 247. Catalysis depends on serine 223, which acts as the Charge relay system. Residues asparagine 232 and asparagine 273 are each glycosylated (N-linked (GlcNAc...) asparagine). The GPI-anchor amidated serine moiety is linked to residue serine 275. A propeptide spans 276–304 (DAYGCRSRASGAYPALLLVLLAFALPESL) (removed in mature form).

This sequence belongs to the peptidase S1 family. In terms of tissue distribution, expressed predominantly in kidney, small intestine and stomach and moderately in thymus, lung, spleen, testis and skin. In the kidney, expressed mainly in collecting duct of renal medulla and cortex.

The protein localises to the cell membrane. Inhibited by aprotinin, leupeptin, benzamidine and soybean trypsin inhibitor. Partially inhibited by PMSF and DFP. Selectively cleaves synthetic peptide substrates of trypsin. Activates the epithelial sodium channel ENaC. The sequence is that of Serine protease 30 (Prss30) from Rattus norvegicus (Rat).